Here is a 61-residue protein sequence, read N- to C-terminus: Photosystem II reaction center protein K (61 aa).

Positions 1 to 24 (MPNILSLTCICFNSVLYPTSFFFA) are excised as a propeptide. Residues 32–52 (IFNPIVDIMPVIPLFFFLLAF) traverse the membrane as a helical segment.

It belongs to the PsbK family. As to quaternary structure, PSII is composed of 1 copy each of membrane proteins PsbA, PsbB, PsbC, PsbD, PsbE, PsbF, PsbH, PsbI, PsbJ, PsbK, PsbL, PsbM, PsbT, PsbX, PsbY, PsbZ, Psb30/Ycf12, at least 3 peripheral proteins of the oxygen-evolving complex and a large number of cofactors. It forms dimeric complexes. Detected in both etioplasts and green leaves; PSII is only assembled in green leaves.

Its subcellular location is the plastid. It localises to the chloroplast thylakoid membrane. Its function is as follows. One of the components of the core complex of photosystem II (PSII). PSII is a light-driven water:plastoquinone oxidoreductase that uses light energy to abstract electrons from H(2)O, generating O(2) and a proton gradient subsequently used for ATP formation. It consists of a core antenna complex that captures photons, and an electron transfer chain that converts photonic excitation into a charge separation. This is Photosystem II reaction center protein K from Hordeum vulgare (Barley).